The primary structure comprises 169 residues: 2-C-methyl-D-erythritol 2,4-cyclodiphosphate synthase (169 aa).

Positions 13 and 15 each coordinate a divalent metal cation. Residues 13–15 (DVH) and 39–40 (HS) contribute to the 4-CDP-2-C-methyl-D-erythritol 2-phosphate site. His-47 provides a ligand contact to a divalent metal cation. Residues 61–63 (DIG), 66–70 (FPDTD), Phe-144, and Arg-147 each bind 4-CDP-2-C-methyl-D-erythritol 2-phosphate.

This sequence belongs to the IspF family. In terms of assembly, homotrimer. A divalent metal cation is required as a cofactor.

It carries out the reaction 4-CDP-2-C-methyl-D-erythritol 2-phosphate = 2-C-methyl-D-erythritol 2,4-cyclic diphosphate + CMP. Its pathway is isoprenoid biosynthesis; isopentenyl diphosphate biosynthesis via DXP pathway; isopentenyl diphosphate from 1-deoxy-D-xylulose 5-phosphate: step 4/6. Functionally, involved in the biosynthesis of isopentenyl diphosphate (IPP) and dimethylallyl diphosphate (DMAPP), two major building blocks of isoprenoid compounds. Catalyzes the conversion of 4-diphosphocytidyl-2-C-methyl-D-erythritol 2-phosphate (CDP-ME2P) to 2-C-methyl-D-erythritol 2,4-cyclodiphosphate (ME-CPP) with a corresponding release of cytidine 5-monophosphate (CMP). This Cupriavidus pinatubonensis (strain JMP 134 / LMG 1197) (Cupriavidus necator (strain JMP 134)) protein is 2-C-methyl-D-erythritol 2,4-cyclodiphosphate synthase.